The following is a 207-amino-acid chain: Large ribosomal subunit protein uL4 (207 aa).

The disordered stretch occupies residues 55–75 (SAVRGGGRKPWRQKGTGRARQ). Residues 60 to 71 (GGRKPWRQKGTG) show a composition bias toward basic residues.

The protein belongs to the universal ribosomal protein uL4 family. As to quaternary structure, part of the 50S ribosomal subunit.

One of the primary rRNA binding proteins, this protein initially binds near the 5'-end of the 23S rRNA. It is important during the early stages of 50S assembly. It makes multiple contacts with different domains of the 23S rRNA in the assembled 50S subunit and ribosome. In terms of biological role, forms part of the polypeptide exit tunnel. This is Large ribosomal subunit protein uL4 from Staphylococcus epidermidis (strain ATCC 35984 / DSM 28319 / BCRC 17069 / CCUG 31568 / BM 3577 / RP62A).